Reading from the N-terminus, the 101-residue chain is Gastrin (101 aa).

The signal sequence occupies residues 1 to 21 (MQRLCVYVLIFALALAAFSEA). The segment at 22–82 (SWKPRSQQPD…SKKQGPWLEE (61 aa)) is disordered. Pyrrolidone carboxylic acid; in form big gastrin is present on Gln59. A Pyrrolidone carboxylic acid; in form gastrin modification is found at Gln76. Tyr87 is subject to Sulfotyrosine; partial. Position 92 is a phenylalanine amide (Phe92). Position 96 is a phosphoserine (Ser96). Positions 96–101 (SAEDEN) are cleaved as a propeptide — removed in mature form.

The protein belongs to the gastrin/cholecystokinin family. Two different processing pathways probably exist in antral G-cells. In the dominant pathway progastrin is cleaved at three sites resulting in two major bioactive gastrins, gastrin-34 and gastrin-17. In the putative alternative pathway, progastrin may be processed only at the most C-terminal dibasic site resulting in the synthesis of gastrin-71. Post-translationally, sulfation enhances proteolytic processing, and blocks peptide degradation. Levels of sulfation differ between proteolytically-cleaved gastrins. Thus, gastrin-6 is almost 73% sulfated, whereas the larger gastrins are less than 50% sulfated. Sulfation levels are also tissue-specific.

The protein localises to the secreted. Functionally, gastrin stimulates the stomach mucosa to produce and secrete hydrochloric acid and the pancreas to secrete its digestive enzymes. It also stimulates smooth muscle contraction and increases blood circulation and water secretion in the stomach and intestine. This Homo sapiens (Human) protein is Gastrin (GAST).